Reading from the N-terminus, the 269-residue chain is Interleukin-1 beta (269 aa).

Positions 1–117 are excised as a propeptide; the sequence is MATVPELNCE…DDDDNLLVCD (117 aa).

It belongs to the IL-1 family. In terms of assembly, monomer. Interacts with MEFV. Interacts with integrins ITGAV:ITGBV and ITGA5:ITGB1; integrin-binding is required for IL1B signaling. Interacts with cargo receptor TMED10; the interaction is direct and is required for the secretion of IL1B mature form. Interacts with HSP90AB1; the interaction facilitates cargo translocation into the ERGIC. Interacts with HSP90B1; the interaction facilitates cargo translocation into the ERGIC. Expressed in activated macrophages (at protein level).

Its subcellular location is the cytoplasm. The protein resides in the cytosol. The protein localises to the secreted. It localises to the lysosome. It is found in the extracellular exosome. Its function is as follows. Potent pro-inflammatory cytokine. Initially discovered as the major endogenous pyrogen, induces prostaglandin synthesis, neutrophil influx and activation, T-cell activation and cytokine production, B-cell activation and antibody production, and fibroblast proliferation and collagen production. Promotes Th17 differentiation of T-cells. Synergizes with IL12/interleukin-12 to induce IFNG synthesis from T-helper 1 (Th1) cells. Plays a role in angiogenesis by inducing VEGF production synergistically with TNF and IL6. Involved in transduction of inflammation downstream of pyroptosis: its mature form is specifically released in the extracellular milieu by passing through the gasdermin-D (GSDMD) pore. In Mus musculus (Mouse), this protein is Interleukin-1 beta (Il1b).